Consider the following 658-residue polypeptide: Probable rhamnogalacturonate lyase B (658 aa).

The first 19 residues, 1–19 (MRFAIPLGAACAWAGVALA), serve as a signal peptide directing secretion. N-linked (GlcNAc...) asparagine glycans are attached at residues Asn110, Asn143, Asn239, Asn280, Asn522, Asn530, Asn592, and Asn633.

The protein belongs to the polysaccharide lyase 4 family.

It localises to the secreted. It catalyses the reaction Endotype eliminative cleavage of L-alpha-rhamnopyranosyl-(1-&gt;4)-alpha-D-galactopyranosyluronic acid bonds of rhamnogalacturonan I domains in ramified hairy regions of pectin leaving L-rhamnopyranose at the reducing end and 4-deoxy-4,5-unsaturated D-galactopyranosyluronic acid at the non-reducing end.. Its function is as follows. Pectinolytic enzymes consist of four classes of enzymes: pectin lyase, polygalacturonase, pectin methylesterase and rhamnogalacturonase. Degrades the rhamnogalacturonan I (RG-I) backbone of pectin. The chain is Probable rhamnogalacturonate lyase B (rglB) from Aspergillus fumigatus (strain CBS 144.89 / FGSC A1163 / CEA10) (Neosartorya fumigata).